Consider the following 183-residue polypeptide: Transcription factor E (183 aa).

Positions 4–97 (YIELVRRYVY…SWSIKDEDIR (94 aa)) constitute an HTH TFE/IIEalpha-type domain.

The protein belongs to the TFE family. In terms of assembly, monomer. Interaction with RNA polymerase subunits RpoF and RpoE is necessary for Tfe stimulatory transcription activity. Able to interact with Tbp and RNA polymerase in the absence of DNA promoter. Interacts both with the preinitiation and elongation complexes.

Functionally, transcription factor that plays a role in the activation of archaeal genes transcribed by RNA polymerase. Facilitates transcription initiation by enhancing TATA-box recognition by TATA-box-binding protein (Tbp), and transcription factor B (Tfb) and RNA polymerase recruitment. Not absolutely required for transcription in vitro, but particularly important in cases where Tbp or Tfb function is not optimal. It dynamically alters the nucleic acid-binding properties of RNA polymerases by stabilizing the initiation complex and destabilizing elongation complexes. Seems to translocate with the RNA polymerase following initiation and acts by binding to the non template strand of the transcription bubble in elongation complexes. This is Transcription factor E from Caldivirga maquilingensis (strain ATCC 700844 / DSM 13496 / JCM 10307 / IC-167).